Reading from the N-terminus, the 214-residue chain is tRNA (guanine-N(7)-)-methyltransferase (214 aa).

S-adenosyl-L-methionine contacts are provided by glutamate 45, glutamate 70, aspartate 97, and aspartate 119. The active site involves aspartate 119. Substrate-binding positions include lysine 123, aspartate 155, and 192 to 195 (TEYE).

This sequence belongs to the class I-like SAM-binding methyltransferase superfamily. TrmB family.

It carries out the reaction guanosine(46) in tRNA + S-adenosyl-L-methionine = N(7)-methylguanosine(46) in tRNA + S-adenosyl-L-homocysteine. The protein operates within tRNA modification; N(7)-methylguanine-tRNA biosynthesis. Functionally, catalyzes the formation of N(7)-methylguanine at position 46 (m7G46) in tRNA. This is tRNA (guanine-N(7)-)-methyltransferase from Clostridioides difficile (strain 630) (Peptoclostridium difficile).